The sequence spans 308 residues: S-adenosylmethionine-dependent nucleotide dehydratase (308 aa).

Residues 7-253 form the Radical SAM core domain; it reads SIQELVINFH…WQSYLMINPE (247 aa). Cys21, Cys25, and Cys28 together coordinate [4Fe-4S] cluster.

It belongs to the radical SAM superfamily. Viperin family. It depends on [4Fe-4S] cluster as a cofactor.

The catalysed reaction is CTP + AH2 + S-adenosyl-L-methionine = 3'-deoxy-3',4'-didehydro-CTP + 5'-deoxyadenosine + L-methionine + A + H2O + H(+). It carries out the reaction GTP + AH2 + S-adenosyl-L-methionine = 3'-deoxy-3',4'-didehydro-GTP + 5'-deoxyadenosine + L-methionine + A + H2O + H(+). The enzyme catalyses UTP + AH2 + S-adenosyl-L-methionine = 3'-deoxy-3',4'-didehydro-UTP + 5'-deoxyadenosine + L-methionine + A + H2O + H(+). Expression of pVip58 in E.coli (strain MG1655) confers resistance to phages lambda, P1 and T7; delays culture collapse upon infection with T7. Catalyzes the conversion of cytidine triphosphate (CTP) to 3'-deoxy-3',4'-didehydro-CTP (ddhCTP), guanosine triphosphate (GTP) to 3'-deoxy-3',4'-didehydro-GTP (ddhGTP) and uridine triphosphate (UTP) to 3'-deoxy-3',4'-didehydro-UTP (ddhUTP), probably via a SAM-dependent radical mechanism. The modified nucleotide represses transcription from T7 RNA polymerase-directed genes (possibly by acting as chain terminators), strongly suggesting these nucleotides block viral polymerase transcription. In Pseudoalteromonas ulvae, this protein is S-adenosylmethionine-dependent nucleotide dehydratase.